Consider the following 450-residue polypeptide: Molybdate-anion transporter (450 aa).

The next 12 membrane-spanning stretches (helical) occupy residues 1–21 (MLVT…GLEL), 38–58 (FLQF…ADWL), 79–99 (ILYV…SSLV), 128–148 (FVLL…FSAF), 167–187 (IPAT…AAGV), 191–211 (AVAS…IPLL), 249–269 (VLLL…FVFL), 278–298 (GAPL…GSSL), 311–331 (PMHL…MLTF), 344–364 (FIAF…MSFL), 376–396 (GVLN…LLVL), and 409–429 (FSIC…LFTV).

Belongs to the major facilitator superfamily.

The protein localises to the cell membrane. Mediates high-affinity intracellular uptake of the rare oligo-element molybdenum. This chain is Molybdate-anion transporter (Mfsd5), found in Mus musculus (Mouse).